Consider the following 210-residue polypeptide: Protein GrpE (210 aa).

A disordered region spans residues 1 to 31 (MAKDPQTPTDEELARAERDAEPQPGDATDDE). The span at 12–21 (ELARAERDAE) shows a compositional bias: basic and acidic residues.

It belongs to the GrpE family. Homodimer.

It is found in the cytoplasm. Its function is as follows. Participates actively in the response to hyperosmotic and heat shock by preventing the aggregation of stress-denatured proteins, in association with DnaK and GrpE. It is the nucleotide exchange factor for DnaK and may function as a thermosensor. Unfolded proteins bind initially to DnaJ; upon interaction with the DnaJ-bound protein, DnaK hydrolyzes its bound ATP, resulting in the formation of a stable complex. GrpE releases ADP from DnaK; ATP binding to DnaK triggers the release of the substrate protein, thus completing the reaction cycle. Several rounds of ATP-dependent interactions between DnaJ, DnaK and GrpE are required for fully efficient folding. The chain is Protein GrpE from Chromohalobacter salexigens (strain ATCC BAA-138 / DSM 3043 / CIP 106854 / NCIMB 13768 / 1H11).